The following is a 214-amino-acid chain: Small ribosomal subunit protein uS5 (214 aa).

In terms of domain architecture, S5 DRBM spans 54–117 (LRYDIVDIGI…RDAKMRIIPV (64 aa)).

The protein belongs to the universal ribosomal protein uS5 family. In terms of assembly, part of the 30S ribosomal subunit. Contacts protein S4.

With S4 and S12 plays an important role in translational accuracy. This is Small ribosomal subunit protein uS5 from Sulfolobus acidocaldarius (strain ATCC 33909 / DSM 639 / JCM 8929 / NBRC 15157 / NCIMB 11770).